The following is a 198-amino-acid chain: Na(+)-translocating NADH-quinone reductase subunit E (198 aa).

Transmembrane regions (helical) follow at residues 11-31 (SIFI…FLAV), 35-55 (VSTA…AVPA), 77-97 (FLNF…LEMI), 110-130 (GIFL…SFMV), 140-160 (VVYG…LAGI), and 176-196 (LGIT…FSGI).

Belongs to the NqrDE/RnfAE family. As to quaternary structure, composed of six subunits; NqrA, NqrB, NqrC, NqrD, NqrE and NqrF.

The protein localises to the cell inner membrane. The catalysed reaction is a ubiquinone + n Na(+)(in) + NADH + H(+) = a ubiquinol + n Na(+)(out) + NAD(+). In terms of biological role, NQR complex catalyzes the reduction of ubiquinone-1 to ubiquinol by two successive reactions, coupled with the transport of Na(+) ions from the cytoplasm to the periplasm. NqrA to NqrE are probably involved in the second step, the conversion of ubisemiquinone to ubiquinol. The protein is Na(+)-translocating NADH-quinone reductase subunit E of Glaesserella parasuis serovar 5 (strain SH0165) (Haemophilus parasuis).